Reading from the N-terminus, the 568-residue chain is Zinc finger protein 76 (568 aa).

Residue Lys-24 forms a Glycyl lysine isopeptide (Lys-Gly) (interchain with G-Cter in SUMO2) linkage. 3 repeat units span residues 34 to 45 (IQLEDGTTAYIH), 62 to 73 (VQLEDGSMAYIH), and 88 to 99 (VQLEDGSTAYIH). The 3 X 12 AA approximate repeats stretch occupies residues 34-99 (IQLEDGTTAY…LEDGSTAYIH (66 aa)). C2H2-type zinc fingers lie at residues 165–189 (FRCG…ERAH), 195–219 (YRCD…VRTH), 225–249 (YKCP…VRTH), 255–279 (FRCP…VRTH), 285–309 (YTCP…VRIH), 315–339 (YVCT…HVVH), and 345–368 (YTCS…RSAH). The segment at 365 to 401 (RSAHGELEATEESEQALYEQQQLEAASAAEESPSPKP) is disordered. A compositionally biased stretch (low complexity) spans 379–396 (QALYEQQQLEAASAAEES).

It belongs to the krueppel C2H2-type zinc-finger protein family.

It localises to the nucleus. Functionally, may be involved in transcriptional regulation. In Rattus norvegicus (Rat), this protein is Zinc finger protein 76 (Znf76).